The following is a 167-amino-acid chain: Troponin C-akin-1 protein (167 aa).

17-20 (YGAL) is a binding site for substrate. The Proton acceptor role is filled by Glu-92.

This sequence belongs to the gamma-glutamylcyclotransferase family. In embryos, expression is seen in heart cells of the dorsal vessel and hindgut visceral mesoderm.

Functionally, putative gamma-glutamylcyclotransferase. The protein is Troponin C-akin-1 protein (Tina-1) of Drosophila melanogaster (Fruit fly).